The sequence spans 259 residues: Ferritin-3, chloroplastic (259 aa).

Residues 1–49 (MLLKAASTFSLLNIHGEKKDISPLFSSSSSISSPVSSGKSGNLSFPLRA) constitute a chloroplast transit peptide. Residues 50–88 (SKSSTTTTSTLSGVVFEPFEEVKKEMDLVPSGQQLSLAR) form an extension peptide (EP) region. A Ferritin-like diiron domain is found at 89–242 (HLYSPECEAA…EYVSQLRRLG (154 aa)). Residues E106, E141, H144, E190, and Q224 each contribute to the Fe cation site.

The protein belongs to the ferritin family. As to quaternary structure, oligomer of 24 subunits. There are two types of subunits: L (light) chain and H (heavy) chain. The major chain can be light or heavy, depending on the species and tissue type. The functional molecule forms a roughly spherical shell with a diameter of 12 nm and contains a central cavity into which the insoluble mineral iron core is deposited.

It localises to the plastid. The protein resides in the chloroplast. The enzyme catalyses 4 Fe(2+) + O2 + 4 H(+) = 4 Fe(3+) + 2 H2O. Stores iron in a soluble, non-toxic, readily available form. Important for iron homeostasis. Has ferroxidase activity. Iron is taken up in the ferrous form and deposited as ferric hydroxides after oxidation. This Arabidopsis thaliana (Mouse-ear cress) protein is Ferritin-3, chloroplastic (FER3).